The sequence spans 228 residues: Cytidylate kinase (228 aa).

ATP is bound at residue 12–20 (GPSGSGKGT).

It belongs to the cytidylate kinase family. Type 1 subfamily.

It localises to the cytoplasm. The catalysed reaction is CMP + ATP = CDP + ADP. It carries out the reaction dCMP + ATP = dCDP + ADP. The polypeptide is Cytidylate kinase (Pseudomonas entomophila (strain L48)).